The primary structure comprises 370 residues: Cytochrome b (370 aa).

4 helical membrane-spanning segments follow: residues 25–45 (FGSMLLTCSALQVLTGFFLAV), 69–90 (WMMQNLHAMGASMFFICIYIHI), 105–125 (WLSGTTLLIMLMATAFFGYVL), and 170–190 (FFALHFILPFGIISFSSLHVM). Heme b is bound by residues His-75 and His-89. Positions 174 and 188 each coordinate heme b. Residue His-193 participates in a ubiquinone binding. Transmembrane regions (helical) follow at residues 218-238 (YKDLFMLSVMITLLLTMISFY), 280-300 (LGGALALAMSIMILLTMPFTH), 312-332 (FMQLMFWTFAATFLVITWTAT), and 339-358 (FTMISQVAALIYFLFFISNP).

Belongs to the cytochrome b family. As to quaternary structure, the cytochrome bc1 complex contains 3 respiratory subunits (MT-CYB, CYC1 and UQCRFS1), 2 core proteins (UQCRC1 and UQCRC2) and probably 6 low-molecular weight proteins. It depends on heme b as a cofactor.

The protein localises to the mitochondrion inner membrane. Component of the ubiquinol-cytochrome c reductase complex (complex III or cytochrome b-c1 complex) that is part of the mitochondrial respiratory chain. The b-c1 complex mediates electron transfer from ubiquinol to cytochrome c. Contributes to the generation of a proton gradient across the mitochondrial membrane that is then used for ATP synthesis. This Corallus hortulanus enydris (Garden tree boa) protein is Cytochrome b (MT-CYB).